The following is a 934-amino-acid chain: MQRYELIRLIGKGGMGEVYLAHDKACSRRVALKRIREDLSGNALLRQRFLREAKIAADLIHPGIVPVYSICSDGEAVYYTMPYIEGFSLKSLLKSVWQKEVLSKELEEKTSVKSFLPIFDKICATVEYIHSKGVLHRDLKPDNILLGLFGEVVIIDWGAAIFKHAKELKLEQDDEAAVSFDERNICYSSMTIPGKIVGTPDYMAPESLLGVEASEKTDIYALGLILYQMLTLAFPYRRKKGRKLSYRDVVLPPIEMSPYREIPPSLSQIAMKAIAINPADRFSSIQELRQALQPYLQGDPEWTVKATLMAKEKSCWKYYDPILLSRYFPVLASSPAQWYNFMLSEVEISASTRVEYTVTKSAVHEGMGILFLPSKEAERGEFYCGYGLWFSVQNHELTVSLIKNGIEIQKKSQEMISQQSRFAILIEKSDNRIAVFVEQALFILHIDYLPSLGNRLGVIIQDLQGMSNIAISESIGALRVSCLAVPDAFLSEKLYDQAAIFYRKIRDSFPGRKESYEAQFRLGVTLLTQIEEQGGDLTQALSSFDYLHGGAGAPLEYLGKALVYQRNGSFVEEIRCLLFALKRYSQHPEIPRLEDHLCFRLYDSLHKHRSEALVFMLLILWIAPEKISVREEERFLRIIYHKQQATLFCQVDKAPLQFRSSKMELFLSFWTGFSLFLPELFRRAGGLRDYQALADIFYVAGVSGNREAFMQFSTALANVSDEITFPESLHNQKVAELMFFVKGVEALRNKDYQKAKKLLWKTPFTLQLYALDMFHIQAFLDEEIESFIDLLQAIYDPTSEEERDHILVYIIQTHLWNRDLERAYKLLNDRFPLDEELAEYSEAFILWGCYLALTGDRVAVKAHFSRCRYKYGKSALIGKCVDGDIFDYLDNLVWWEKKMTLFQSYFLLRCLNESPRRYEKYRQAYLSMENNFFD.

A Protein kinase domain is found at 4–296; the sequence is YELIRLIGKG…ELRQALQPYL (293 aa). ATP contacts are provided by residues 10–18 and lysine 33; that span reads IGKGGMGEV. Residue aspartate 138 is the Proton acceptor of the active site.

This sequence belongs to the protein kinase superfamily. Ser/Thr protein kinase family. Post-translationally, autophosphorylated on serine and threonine residues.

The catalysed reaction is L-seryl-[protein] + ATP = O-phospho-L-seryl-[protein] + ADP + H(+). The enzyme catalyses L-threonyl-[protein] + ATP = O-phospho-L-threonyl-[protein] + ADP + H(+). Functionally, together with the serine/threonine kinase Pkn1, may play a role in the specific interactions with host proteins during intracellular growth. In Chlamydia trachomatis serovar A (strain ATCC VR-571B / DSM 19440 / HAR-13), this protein is Serine/threonine-protein kinase PknD.